Here is a 471-residue protein sequence, read N- to C-terminus: G2/mitotic-specific cyclin-1 (471 aa).

Belongs to the cyclin family. Cyclin AB subfamily.

Functionally, essential for the control of the cell cycle at the G2/M (mitosis) transition. Interacts with the CDC2 protein kinase to form MPF. G2/M cyclins accumulate steadily during G2 and are abruptly destroyed at mitosis. This is G2/mitotic-specific cyclin-1 (CLB1) from Saccharomyces cerevisiae (strain ATCC 204508 / S288c) (Baker's yeast).